Consider the following 139-residue polypeptide: Actin-depolymerizing factor 6 (139 aa).

Positions 5–139 (ASGMAVGDEC…SMDIVKARAL (135 aa)) constitute an ADF-H domain.

Belongs to the actin-binding proteins ADF family.

Its function is as follows. Actin-depolymerizing protein. Severs actin filaments (F-actin) and binds to actin monomers. The protein is Actin-depolymerizing factor 6 (ADF6) of Oryza sativa subsp. japonica (Rice).